The following is a 256-amino-acid chain: Trypsinogen-like protein 3 (256 aa).

Residues 1–14 (MILLLVLALGLAGA) form the signal peptide. The region spanning 15-237 (SPLGEYKECP…YNDWIHQVMA (223 aa)) is the Peptidase S1 domain. Cystine bridges form between cysteine 23-cysteine 153, cysteine 41-cysteine 57, cysteine 125-cysteine 226, cysteine 132-cysteine 199, cysteine 164-cysteine 180, and cysteine 189-cysteine 213.

It belongs to the peptidase S1 family.

The chain is Trypsinogen-like protein 3 (trp3) from Pseudopleuronectes americanus (Winter flounder).